A 324-amino-acid chain; its full sequence is DNA repair and recombination protein RadA (324 aa).

Gly114 to Thr121 is a binding site for ATP.

It belongs to the eukaryotic RecA-like protein family.

In terms of biological role, involved in DNA repair and in homologous recombination. Binds and assemble on single-stranded DNA to form a nucleoprotein filament. Hydrolyzes ATP in a ssDNA-dependent manner and promotes DNA strand exchange between homologous DNA molecules. This is DNA repair and recombination protein RadA from Metallosphaera sedula (strain ATCC 51363 / DSM 5348 / JCM 9185 / NBRC 15509 / TH2).